The primary structure comprises 363 residues: MSPSTINPESSPLHTYYFSMVEMSIMKLFLDHKIFTLIPTTPGASIPVTTLTTTLNASPSLLTRLTNFLIASGVLSSPQPGHIAHTPKSLQFTDPTSYQALFFAHIFDFFLVPAVKWPGYMAEHGLNEPTSASRTPFGYAAGYPDKTLYEILETMPKRAAQFNATMAASFQPMPVLGMYDFSWIEKLADEERMAIVDVGGGKGQALKEILGAYPGIRPEQCVLFDVDDVIREAVAEAERDDDETWRTVRKIPGSFFSEQPVKGAAVYHIRRVLNDWPDEDCVTILRRIRDAAAPNSRVLISEQILQEEPSLAVAALDLWMLNFGGKRRSEGMFGELAQRTGWKVNGVFRDKESDTGVVELVVA.

S-adenosyl-L-methionine is bound by residues 199–200 (GG), D225, 254–255 (SF), R270, and R271.

This sequence belongs to the class I-like SAM-binding methyltransferase superfamily. Cation-independent O-methyltransferase family.

The protein operates within secondary metabolite biosynthesis. Functionally, methyltransferase; part of the gene cluster that mediates the biosynthesis of pyranonigrins, a family of antioxidative compounds. The first step of pyranonigrins biosynthesis is performed by the hybrid PKS-NRPS synthetase that condenses 6 malonyl-CoA units to an acetyl starter unit, to form a 1,3,5-trioxotetradecane-6,8-dienyl-ACP. The enoyl reductase (ER) domain of pynA is likely to be functional during the first two rounds of polyketide chain extension, to generate the saturated C-C bonds of the alkyl side chain. PynA subsequently forms the amide bond between the acyl chain and L-serine. Although pynA has a terminal reductase domain, it appears to require the thioesterase pynI for the release of the straight-chain intermediate from pynA via the formation of a tetramic acid pyranonigrin J. The methyltransferase pynC then coverts pyranonigrin J to pyranonigrin I via N-methylation. The FAD-dependent monooxygenase pynG catalyzes an epoxidation-mediated cyclization to form the dihydro-gamma-pyrone moiety, followed by pynD-catalyzed oxidation of the alcohol to the ketone and enolization to yield the characteristic tetramic acid-fused gamma-pyrone core of pyranonigrin H. Pyranonigrin H is substrate of pynH for dehydration-mediated exo-methylene formation from the serine side chain to produce pyranonigrin E, before the oxidase pynE reduces the exo-methylene of pyranonigrin E into a pendant methyl to form pyranonigrin G. The FAD-linked oxidoreductase pynB performs the reverse reaction and converts pyranonigrin G back to pyranonigrin E. In Aspergillus niger (strain ATCC MYA-4892 / CBS 513.88 / FGSC A1513), this protein is Methyltransferase pynC.